A 204-amino-acid polypeptide reads, in one-letter code: HTH-type transcriptional activator BcrR (204 aa).

Residues 1-81 are Cytoplasmic-facing; that stretch reads MEFNEKLQQL…ETENRSNLKK (81 aa). The 55-residue stretch at 7–61 folds into the HTH cro/C1-type domain; that stretch reads LQQLRTGKNLTQEQLAEQLYVSRTAISKWESGKGYPNMESLKCISKFFSVTIDEL. Positions 18–37 form a DNA-binding region, H-T-H motif; sequence QEQLAEQLYVSRTAISKWES. Residues 82–102 form a helical membrane-spanning segment; that stretch reads IYNYIYGILDMMAVAFIFLPL. At 103 to 126 the chain is on the extracellular side; sequence YGNSVGGYVYAVNLLSFTATTPFN. Residues 127 to 147 traverse the membrane as a helical segment; it reads LAVYWSAFAALIIIGIGKIIS. Over 148–154 the chain is Cytoplasmic; that stretch reads THLDKEK. Residues 155–175 traverse the membrane as a helical segment; the sequence is WGGIATKCSLTITALAVCFFA. Residues 176-181 lie on the Extracellular side of the membrane; that stretch reads AAREPY. The helical transmembrane segment at 182-202 threads the bilayer; that stretch reads ITVLVFLLLIGKIFVWIKQMG. At 203-204 the chain is on the cytoplasmic side; the sequence is MK.

It is found in the cell membrane. Constitutively bound to the bcrABD promoter. Requires bacitracin for activation, probably through a conformational change, such as the oligomerization of inactive dimers to form active tetramers. In terms of biological role, functions both as a membrane-bound sensor and a transducer of bacitracin availability to activate transcription of the bcrABD operon in the presence of bacitracin. Binds specifically to two inverted repeat sequences on the bcrABD promoter, irrespective of bacitracin concentration. The sequence is that of HTH-type transcriptional activator BcrR from Enterococcus faecalis (Streptococcus faecalis).